The following is a 520-amino-acid chain: Polycomb protein PHO (520 aa).

C2H2-type zinc fingers lie at residues 357–381 (IACPHKGCNKHFRDSSAMRKHLHTH), 386–408 (HVCAECGKAFVESSKLKRHQLVH), 414–438 (FQCTFEGCGKRFSLDFNLRTHVRIH), and 444–468 (FVCPFDACNKKFAQSTNLKSHILTH). The segment at 475-497 (TSISGKSGCSNAESNSQSEDTSA) is disordered.

As to quaternary structure, component of the Esc/E(z) complex, composed of Esc, E(z), Su(z)12, HDAC1/Rpd3 and Caf1-55. This complex is distinct from the PRC1 complex, which contains many other PcG proteins like Pc, Ph, Psc, Su(z)2. The two complexes however cooperate and interact together during the first 3 hours of development to establish PcG silencing. Component of the chromatin remodeling Ino80 complex. Interacts with Sfmbt to form a pho-repressive complex (PhoRC).

It is found in the nucleus. Functionally, polycomb group (PcG) protein that binds to the 5'-CNGCCATNNNNG-3' sequence found in the regulatory regions of many genes. PcG proteins act by forming multiprotein complexes, which are required to maintain the transcriptionally repressive state of homeotic genes throughout development. PcG proteins are not required to initiate repression, but to maintain it during later stages of development. They probably act via the methylation of histones, rendering chromatin heritably changed in its expressibility. Probably targets the Esc/E(z) complex to DNA. Necessary but not sufficient to recruit a functional PcG repressive complex that represses target genes, suggesting that the recruitment of the distinct PRC1 complex is also required to allow a subsequent repression. Proposed core component of the chromatin remodeling Ino80 complex which is involved in transcriptional regulation, DNA replication and probably DNA repair. In Drosophila melanogaster (Fruit fly), this protein is Polycomb protein PHO (pho).